The sequence spans 266 residues: Electron transfer flavoprotein subunit beta (266 aa).

Belongs to the ETF beta-subunit/FixA family. In terms of assembly, heterodimer of an alpha and a beta subunit. It depends on FAD as a cofactor. AMP is required as a cofactor.

Its function is as follows. The electron transfer flavoprotein serves as a specific electron acceptor for other dehydrogenases. It transfers the electrons to the main respiratory chain via ETF-ubiquinone oxidoreductase (ETF dehydrogenase). The sequence is that of Electron transfer flavoprotein subunit beta (etfB) from Mycobacterium bovis (strain ATCC BAA-935 / AF2122/97).